The primary structure comprises 634 residues: DNA-directed RNA polymerase subunit gamma (634 aa).

Zn(2+) is bound by residues C74, C76, C89, and C92. Residues D471, D473, and D475 each coordinate Mg(2+).

The protein belongs to the RNA polymerase beta' chain family. RpoC1 subfamily. As to quaternary structure, in cyanobacteria the RNAP catalytic core is composed of 2 alpha, 1 beta, 1 beta', 1 gamma and 1 omega subunit. When a sigma factor is associated with the core the holoenzyme is formed, which can initiate transcription. The cofactor is Mg(2+). Zn(2+) serves as cofactor.

The enzyme catalyses RNA(n) + a ribonucleoside 5'-triphosphate = RNA(n+1) + diphosphate. Its function is as follows. DNA-dependent RNA polymerase catalyzes the transcription of DNA into RNA using the four ribonucleoside triphosphates as substrates. The chain is DNA-directed RNA polymerase subunit gamma from Prochlorococcus marinus (strain MIT 9313).